Consider the following 1705-residue polypeptide: Homeobox-DDT domain protein RLT1 (1705 aa).

Disordered regions lie at residues 1–53 (MEMG…QLET), 118–167 (ELPA…EYET), 237–267 (HDPR…TPNM), 296–322 (GPVP…MPSP), and 352–414 (GVRK…RKEE). Residues 39 to 98 (VKPKRQMKTPFQLETLEKVYSEEKYPSEATRAELSEKLDLSDRQLQMWFCHRRLKDKKDG) constitute a DNA-binding region (homeobox). The span at 136 to 159 (GSESGCSPYSNSRRNFASGSSSSR) shows a compositional bias: low complexity. Composition is skewed to polar residues over residues 253–265 (EQQS…SFTP) and 310–319 (RNCSTSQQDM). In terms of domain architecture, DDT spans 549-608 (DETVGNLLMVWRFLISFSDVLDLWPFTLDEFIQAFHDYDSRLLGEIHVTLLRSIIRDVED). The region spanning 731–800 (GTVKFAAFHV…APSTYCVRAP (70 aa)) is the HTH HARE-type domain. Disordered regions lie at residues 1028–1053 (TRER…DLSN), 1198–1229 (VNHS…SIRV), 1441–1502 (PEDE…KAQS), 1561–1635 (PKSE…FVDY), and 1652–1705 (AIEE…SSDS). Over residues 1201 to 1220 (SPTDSVSPSSSAISGSNSDS) the composition is skewed to low complexity. The segment covering 1455–1465 (SPFKGKGPREQ) has biased composition (basic and acidic residues). Acidic residues-rich tracts occupy residues 1565–1574 (EVEEDEEEEE), 1611–1628 (VDDE…DEDG), and 1669–1684 (GEDD…DDDV).

In terms of assembly, interacts with CHR11 and CHR17. Interacts (via the DDT domain) with CHR11 (via C-terminus). In terms of tissue distribution, highly expressed in growing tissues such as inflorescence and flower meristems, young leaves and floral organs. Expressed in roots, rosette and cauline leaves, stems, flowers, inflorescences and siliques.

The protein resides in the nucleus. In terms of biological role, transcriptional regulator required for the maintenance of the plant vegetative phase. In association with CHR11 or CHR17 may prevent the early activation of the vegetative-to-reproductive transition by regulating key genes that contribute to flower timing, such as FT, SEP1, SEP3, AGL8/FUL, SOC1 and FLC. This chain is Homeobox-DDT domain protein RLT1, found in Arabidopsis thaliana (Mouse-ear cress).